A 153-amino-acid chain; its full sequence is Putative riboflavin kinase (153 aa).

Mg(2+) is bound by residues Thr-28 and Asn-30. Glu-80 acts as the Nucleophile in catalysis.

In terms of assembly, monomer. It depends on Zn(2+) as a cofactor. Mg(2+) is required as a cofactor.

The protein resides in the cytoplasm. It carries out the reaction riboflavin + ATP = FMN + ADP + H(+). Its pathway is cofactor biosynthesis; FMN biosynthesis; FMN from riboflavin (ATP route): step 1/1. Functionally, catalyzes the phosphorylation of riboflavin (vitamin B2) to form flavin-mononucleotide (FMN). This Drosophila melanogaster (Fruit fly) protein is Putative riboflavin kinase.